The following is a 300-amino-acid chain: UDP-N-acetylenolpyruvoylglucosamine reductase (300 aa).

The FAD-binding PCMH-type domain maps to 30–194 (KVGGAADFFV…VGATFRLDPA (165 aa)). The active site involves arginine 174. Serine 223 functions as the Proton donor in the catalytic mechanism. Glutamate 293 is an active-site residue.

This sequence belongs to the MurB family. The cofactor is FAD.

The protein resides in the cytoplasm. The catalysed reaction is UDP-N-acetyl-alpha-D-muramate + NADP(+) = UDP-N-acetyl-3-O-(1-carboxyvinyl)-alpha-D-glucosamine + NADPH + H(+). It functions in the pathway cell wall biogenesis; peptidoglycan biosynthesis. Functionally, cell wall formation. This chain is UDP-N-acetylenolpyruvoylglucosamine reductase, found in Geobacter metallireducens (strain ATCC 53774 / DSM 7210 / GS-15).